A 202-amino-acid polypeptide reads, in one-letter code: Small ribosomal subunit protein uS4c (202 aa).

Residues 90–165 enclose the S4 RNA-binding domain; the sequence is MRLDNILFRL…SQKYKIPNHL (76 aa).

This sequence belongs to the universal ribosomal protein uS4 family. In terms of assembly, part of the 30S ribosomal subunit. Contacts protein S5. The interaction surface between S4 and S5 is involved in control of translational fidelity.

The protein localises to the plastid. It is found in the chloroplast. One of the primary rRNA binding proteins, it binds directly to 16S rRNA where it nucleates assembly of the body of the 30S subunit. In terms of biological role, with S5 and S12 plays an important role in translational accuracy. The chain is Small ribosomal subunit protein uS4c (rps4) from Diphyscium foliosum (Nut-moss).